The following is a 445-amino-acid chain: NADH-quinone oxidoreductase subunit F (445 aa).

61 to 70 (GRGGAGFSTG) provides a ligand contact to NAD(+). 174–221 (GAGRYICGEETALINSLEGRRANPRSKPPFPATSGAWGKPTCVNNVET) contacts FMN. [4Fe-4S] cluster is bound by residues Cys-351, Cys-354, Cys-357, and Cys-398.

Belongs to the complex I 51 kDa subunit family. As to quaternary structure, composed of 13 different subunits. Subunits NuoCD, E, F, and G constitute the peripheral sector of the complex. It depends on FMN as a cofactor. Requires [4Fe-4S] cluster as cofactor.

It carries out the reaction a quinone + NADH + 5 H(+)(in) = a quinol + NAD(+) + 4 H(+)(out). NDH-1 shuttles electrons from NADH, via FMN and iron-sulfur (Fe-S) centers, to quinones in the respiratory chain. The immediate electron acceptor for the enzyme in this species is believed to be ubiquinone. Couples the redox reaction to proton translocation (for every two electrons transferred, four hydrogen ions are translocated across the cytoplasmic membrane), and thus conserves the redox energy in a proton gradient. The polypeptide is NADH-quinone oxidoreductase subunit F (nuoF) (Escherichia coli (strain K12)).